We begin with the raw amino-acid sequence, 551 residues long: Eukaryotic translation initiation factor 3 subunit D-2 (551 aa).

The tract at residues 91-154 is disordered; that stretch reads TKPYQRGRYR…RNTQNMGRRF (64 aa). The segment covering 95–113 has biased composition (basic residues); it reads QRGRYRPNMRNNVRSRGRT. Positions 121–136 are enriched in low complexity; it reads ASLGGSTAGGATASTT. Residues 290–304 form an RNA gate region; sequence QFDLLTVNETSVEPP. The tract at residues 527–551 is disordered; sequence PENAFDSDGDEEEESSDPLSNSNDN. Positions 531–542 are enriched in acidic residues; sequence FDSDGDEEEESS.

The protein belongs to the eIF-3 subunit D family. In terms of assembly, component of the eukaryotic translation initiation factor 3 (eIF-3) complex. The eIF-3 complex interacts with pix.

It is found in the cytoplasm. MRNA cap-binding component of the eukaryotic translation initiation factor 3 (eIF-3) complex, which is involved in protein synthesis of a specialized repertoire of mRNAs and, together with other initiation factors, stimulates binding of mRNA and methionyl-tRNAi to the 40S ribosome. The eIF-3 complex specifically targets and initiates translation of a subset of mRNAs involved in cell proliferation. In the eIF-3 complex, eif3d specifically recognizes and binds the 7-methylguanosine cap of a subset of mRNAs. This is Eukaryotic translation initiation factor 3 subunit D-2 from Drosophila melanogaster (Fruit fly).